A 123-amino-acid polypeptide reads, in one-letter code: Small ribosomal subunit protein uS12 (123 aa).

The residue at position 89 (D89) is a 3-methylthioaspartic acid.

It belongs to the universal ribosomal protein uS12 family. As to quaternary structure, part of the 30S ribosomal subunit. Contacts proteins S8 and S17. May interact with IF1 in the 30S initiation complex.

Functionally, with S4 and S5 plays an important role in translational accuracy. Its function is as follows. Interacts with and stabilizes bases of the 16S rRNA that are involved in tRNA selection in the A site and with the mRNA backbone. Located at the interface of the 30S and 50S subunits, it traverses the body of the 30S subunit contacting proteins on the other side and probably holding the rRNA structure together. The combined cluster of proteins S8, S12 and S17 appears to hold together the shoulder and platform of the 30S subunit. In Rhizobium etli (strain ATCC 51251 / DSM 11541 / JCM 21823 / NBRC 15573 / CFN 42), this protein is Small ribosomal subunit protein uS12.